The primary structure comprises 278 residues: Bifunctional protein FolD (278 aa).

NADP(+) contacts are provided by residues 165-167 (GRS) and Ser190.

The protein belongs to the tetrahydrofolate dehydrogenase/cyclohydrolase family. In terms of assembly, homodimer.

It carries out the reaction (6R)-5,10-methylene-5,6,7,8-tetrahydrofolate + NADP(+) = (6R)-5,10-methenyltetrahydrofolate + NADPH. The enzyme catalyses (6R)-5,10-methenyltetrahydrofolate + H2O = (6R)-10-formyltetrahydrofolate + H(+). It functions in the pathway one-carbon metabolism; tetrahydrofolate interconversion. Functionally, catalyzes the oxidation of 5,10-methylenetetrahydrofolate to 5,10-methenyltetrahydrofolate and then the hydrolysis of 5,10-methenyltetrahydrofolate to 10-formyltetrahydrofolate. The sequence is that of Bifunctional protein FolD from Clostridium tetani (strain Massachusetts / E88).